The sequence spans 410 residues: Multidrug resistance protein MdtM (410 aa).

Topologically, residues 1–11 (MPRFFTRHAAT) are cytoplasmic. A helical membrane pass occupies residues 12-32 (LFFPMALILYDFAAYLSTDLI). The Periplasmic portion of the chain corresponds to 33 to 48 (QPGIINVVRDFNADVS). A helical transmembrane segment spans residues 49–69 (LAPAAVSLYLAGGMALQWLLG). Over 70–78 (PLSDRIGRR) the chain is Cytoplasmic. The helical transmembrane segment at 79–99 (PVLITGALIFTLACAATMFTT) threads the bilayer. The Periplasmic portion of the chain corresponds to 100–103 (SMTQ). Residues 104–124 (FLIARAIQGTSICFIATVGYV) form a helical membrane-spanning segment. Over 125-140 (TVQEAFGQTKGIKLMA) the chain is Cytoplasmic. The chain crosses the membrane as a helical span at residues 141–161 (IITSIVLIAPIIGPLSGAALM). Over 162–167 (HFMHWK) the chain is Periplasmic. Residues 168–188 (VLFAIIAVMGFISFVGLLLAM) form a helical membrane-spanning segment. Residues 189–216 (PETVKRGAVPFSAKSVLRDFRNVFCNRL) are Cytoplasmic-facing. A helical transmembrane segment spans residues 217–237 (FLFGAATISLSYIPMMSWVAV). Residues 238-251 (SPVILIDAGSLTTS) are Periplasmic-facing. The chain crosses the membrane as a helical span at residues 252–272 (QFAWTQVPVFGAVIVANAIVA). Topologically, residues 273 to 282 (RFVKDPTEPR) are cytoplasmic. The helical transmembrane segment at 283–303 (FIWRAVPIQLVGLSLLIVGNL) threads the bilayer. The Periplasmic segment spans residues 304–307 (LSPH). Residues 308 to 328 (VWLWSVLGTSLYAFGIGLIFP) form a helical membrane-spanning segment. Topologically, residues 329-348 (TLFRFTLFSNKLPKGTVSAS) are cytoplasmic. A helical membrane pass occupies residues 349–369 (LNMVILMVMSVSVEIGRWLWF). At 370–373 (NGGR) the chain is on the periplasmic side. The helical transmembrane segment at 374–394 (LPFHLLAVVAGVIVVFTLAGL) threads the bilayer. At 395 to 410 (LNRVRQHQAAELVEEQ) the chain is on the cytoplasmic side.

It belongs to the major facilitator superfamily. As to quaternary structure, monomer.

The protein localises to the cell inner membrane. The catalysed reaction is Na(+)(in) + 2 H(+)(out) = Na(+)(out) + 2 H(+)(in). The enzyme catalyses K(+)(in) + H(+)(out) = K(+)(out) + H(+)(in). Its activity is regulated as follows. Efflux is inhibited by the ionophore carbonyl cyanide 3-chlorophenylhydrazone (CCCP). In terms of biological role, proton-dependent efflux pump. Confers resistance to a broad spectrum of chemically unrelated substrates. Overexpression confers resistance to acriflavine, chloramphenicol, norfloxacin, ethidium bromide and tetraphenylphosphonium bromide (TPP). Can also export a broad range of quaternary ammonium compounds (QACs) and contribute to the intrinsic resistance of E.coli to these antimicrobial compounds. In addition to its role in multidrug resistance, MdtM likely plays a physiological role in alkaline pH homeostasis and in resistance to bile salts. May function in alkaline pH homeostasis when millimolar concentrations of sodium or potassium are present in the growth medium. When overexpressed, can confer a tolerance to alkaline pH values up to 9.75. Probably acts as a low-affinity antiporter that catalyzes the exchange of internal Na(+) and K(+) cations for extracellular protons to maintain a stable internal pH, acid relative to outside, during exposure to alkaline environments. Can also catalyze Rb(+)/H(+) and Li(+)/H(+) antiport, but not Ca(2+)/H(+) exchange. The exact stoichiometry of antiport is unknown. Finally, it could contribute to bile salt resistance by catalyzing the transport of bile salts out of the cell cytoplasm. Mediates a bile salt/H(+) exchange driven by the electrochemical gradient. Binds to cholate and deoxycholate with micromolar affinity and catalyzes both cholate/H(+) and deoxycholate/H(+) exchange reactions. The chain is Multidrug resistance protein MdtM from Escherichia coli (strain K12).